The chain runs to 217 residues: Probable D-methionine transport system permease protein MetI (217 aa).

Residues 13–207 form the ABC transmembrane type-1 domain; that stretch reads TLETLYMGFI…LIVMLSQKLG (195 aa). 5 consecutive transmembrane segments (helical) span residues 20 to 40, 58 to 78, 81 to 101, 143 to 163, and 184 to 204; these read GFIA…LAFL, VIIN…LLPF, LVVG…VSAI, IPIL…YSAM, and NMIY…MLSQ.

It belongs to the binding-protein-dependent transport system permease family. CysTW subfamily.

Its subcellular location is the cell inner membrane. Its function is as follows. Part of the binding-protein-dependent transport system for D-methionine. Probably responsible for the translocation of the substrate across the membrane. The polypeptide is Probable D-methionine transport system permease protein MetI (metI) (Pasteurella multocida (strain Pm70)).